We begin with the raw amino-acid sequence, 148 residues long: Ribonuclease P protein component (148 aa).

Positions 119 to 148 (PLPAAPGTMPPARAPRPSSLSPTEPDPRSD) are disordered.

Belongs to the RnpA family. In terms of assembly, consists of a catalytic RNA component (M1 or rnpB) and a protein subunit.

The enzyme catalyses Endonucleolytic cleavage of RNA, removing 5'-extranucleotides from tRNA precursor.. RNaseP catalyzes the removal of the 5'-leader sequence from pre-tRNA to produce the mature 5'-terminus. It can also cleave other RNA substrates such as 4.5S RNA. The protein component plays an auxiliary but essential role in vivo by binding to the 5'-leader sequence and broadening the substrate specificity of the ribozyme. This chain is Ribonuclease P protein component, found in Xanthomonas campestris pv. campestris (strain 8004).